Reading from the N-terminus, the 485-residue chain is Serine hydroxymethyltransferase, mitochondrial (485 aa).

Lysine 259 carries the N6-(pyridoxal phosphate)lysine modification.

This sequence belongs to the SHMT family. Homotetramer. Pyridoxal 5'-phosphate serves as cofactor.

Its subcellular location is the mitochondrion. The enzyme catalyses (6R)-5,10-methylene-5,6,7,8-tetrahydrofolate + glycine + H2O = (6S)-5,6,7,8-tetrahydrofolate + L-serine. It functions in the pathway one-carbon metabolism; tetrahydrofolate interconversion. Functionally, interconversion of serine and glycine. In Candida glabrata (strain ATCC 2001 / BCRC 20586 / JCM 3761 / NBRC 0622 / NRRL Y-65 / CBS 138) (Yeast), this protein is Serine hydroxymethyltransferase, mitochondrial (SHM1).